The chain runs to 1837 residues: AF4/FMR2 family member lilli (1837 aa).

9 disordered regions span residues 1 to 25, 65 to 109, 162 to 295, 455 to 592, 605 to 712, 797 to 852, 868 to 1250, 1267 to 1311, and 1344 to 1466; these read MAQQ…QQQQ, NLYS…PRRL, IQQQ…LHNG, QQLP…KKKY, TGLL…PGNV, PKSQ…LQIP, NNMQ…GGAK, QQQQ…GLAS, and APSS…DPML. Positions 16 to 25 are enriched in low complexity; that stretch reads HQQQQQQQQQ. Residues 84 to 109 show a composition bias toward basic and acidic residues; sequence REKYERQQGIQSDDRETSLFSEPRRL. Composition is skewed to low complexity over residues 162 to 179, 187 to 200, and 247 to 264; these read IQQQ…VASS, QTQQ…QQQQ, and NSNS…SSSS. T468 bears the Phosphothreonine mark. The span at 475–488 shows a compositional bias: basic and acidic residues; that stretch reads LKIEKNPILEKQDS. The segment covering 490–500 has biased composition (acidic residues); sequence LENDLELSESE. S497 and S499 each carry phosphoserine. Low complexity-rich tracts occupy residues 509–529 and 542–552; these read SPGS…SESS and QQQQQTQQQQL. Residues 553-563 show a composition bias toward basic residues; the sequence is HGHHPQSHHHQ. The span at 564–583 shows a compositional bias: low complexity; it reads QFLQQQLQRQQQQQQQQQQL. Gly residues-rich tracts occupy residues 612–633 and 641–673; these read GGLG…GNGG and GSMG…GIGS. Polar residues-rich tracts occupy residues 678–690 and 698–711; these read NKTP…NKWN and PTSQ…SPGN. Residues 815–837 show a composition bias toward low complexity; it reads SESATSGSSSSSCSSSDSAASAS. A compositionally biased stretch (polar residues) spans 868-880; the sequence is NNMQKSQSMSVTV. A compositionally biased stretch (basic residues) spans 892–902; it reads PRQKKPRKKKM. Phosphoserine occurs at positions 913 and 914. Low complexity-rich tracts occupy residues 927 to 951 and 961 to 1013; these read VVAQ…ATTT and QQQQ…SSVL. A DNA-binding region (a.T hook) is located at residues 952-964; that stretch reads KKGRGRPRKQQQQ. A phosphoserine mark is found at S974 and S976. Positions 1021-1033 are enriched in polar residues; the sequence is SQSSSNGNTPTKK. Composition is skewed to low complexity over residues 1034 to 1049, 1056 to 1091, 1130 to 1139, and 1157 to 1173; these read MSSI…SAAA, AVAA…SSSS, GSSSPTSSSS, and ISNS…VNNN. The span at 1174–1184 shows a compositional bias: polar residues; the sequence is LQQQAMPQQSP. The segment covering 1189–1212 has biased composition (low complexity); sequence LSGGSQQLSSSDSSSSSSGSSSSS. Positions 1217 to 1234 are enriched in basic and acidic residues; the sequence is DAKREKNRERKPKSDKNK. Residues 1267–1276 are compositionally biased toward low complexity; it reads QQQQQQQQVQ. Polar residues predominate over residues 1345–1355; the sequence is PSSSNQQNGHL. Positions 1373 to 1386 are enriched in basic residues; the sequence is KVKHEHHQLHHHSQ. 2 stretches are compositionally biased toward basic and acidic residues: residues 1393–1407 and 1416–1432; these read VKPE…ETKF and FQLK…ERDQ. S1517 bears the Phosphoserine mark. A compositionally biased stretch (polar residues) spans 1550–1560; the sequence is AVQTTPPTSVT. Disordered regions lie at residues 1550-1571 and 1727-1756; these read AVQT…LVSQ and GNTP…IVPQ. A compositionally biased stretch (low complexity) spans 1727-1747; sequence GNTPSSISPSNSVGSQGSGSN.

This sequence belongs to the AF4 family.

The protein resides in the nucleus. In terms of biological role, has a role in transcriptional regulation. Acts in parallel with the Ras/MAPK and the PI3K/PKB pathways in the control of cell identity and cellular growth. Essential for regulation of the cytoskeleton and cell growth but not for cell proliferation or growth rate. Required specifically for the microtubule-based basal transport of lipid droplets. Plays a partially redundant function downstream of Raf in cell fate specification in the developing eye. Pair-rule protein that regulates embryonic cellularization, gastrulation and segmentation. In Drosophila willistoni (Fruit fly), this protein is AF4/FMR2 family member lilli.